The chain runs to 400 residues: S-adenosylmethionine synthase (400 aa).

Histidine 17 serves as a coordination point for ATP. Aspartate 19 lines the Mg(2+) pocket. A K(+)-binding site is contributed by glutamate 45. L-methionine-binding residues include glutamate 58 and glutamine 101. Residues 101–111 (QSADIAMGVDQ) are flexible loop. ATP is bound by residues 177–179 (DGK), 244–245 (RF), aspartate 253, 259–260 (RK), alanine 276, and lysine 280. Residue aspartate 253 coordinates L-methionine. L-methionine is bound at residue lysine 284.

The protein belongs to the AdoMet synthase family. In terms of assembly, homotetramer; dimer of dimers. Requires Mg(2+) as cofactor. K(+) serves as cofactor.

The protein resides in the cytoplasm. The enzyme catalyses L-methionine + ATP + H2O = S-adenosyl-L-methionine + phosphate + diphosphate. The protein operates within amino-acid biosynthesis; S-adenosyl-L-methionine biosynthesis; S-adenosyl-L-methionine from L-methionine: step 1/1. In terms of biological role, catalyzes the formation of S-adenosylmethionine (AdoMet) from methionine and ATP. The overall synthetic reaction is composed of two sequential steps, AdoMet formation and the subsequent tripolyphosphate hydrolysis which occurs prior to release of AdoMet from the enzyme. This Bacillus subtilis (strain 168) protein is S-adenosylmethionine synthase.